The chain runs to 467 residues: NADH-quinone oxidoreductase subunit N 2 (467 aa).

The next 13 membrane-spanning stretches (helical) occupy residues 1 to 21 (MSIFSLLPELWLLGLVCALFV), 31 to 51 (VASWLPMAAGLGVLAALFALG), 66 to 86 (LSQFFKLLIAFGFAVVTGIAA), 99 to 119 (FMLLALSAWGLMLLASCVELI), 153 to 173 (ILFGAAVTALALFGLSYIIAA), 195 to 215 (AVIGLTLFLAGFFYKLALFPF), 231 to 253 (AAYVATIPKLGAVVVLVRLAAFV), 258 to 280 (EVTTILAILGAVSMTAGNLAALV), 287 to 307 (LLGFSSVAHAGYVMLGLAAGS), 315 to 335 (AFYSLAYILMNLAAFYVVCAI), 357 to 377 (LAMILAVAAFSLVGLPPTAGF), 394 to 414 (WLVIVAVLNTAISIYYYLSMV), and 434 to 454 (LIFGGALAVLVLLLGILPAPL).

It belongs to the complex I subunit 2 family. In terms of assembly, NDH-1 is composed of 14 different subunits. Subunits NuoA, H, J, K, L, M, N constitute the membrane sector of the complex.

It is found in the cell inner membrane. The catalysed reaction is a quinone + NADH + 5 H(+)(in) = a quinol + NAD(+) + 4 H(+)(out). Functionally, NDH-1 shuttles electrons from NADH, via FMN and iron-sulfur (Fe-S) centers, to quinones in the respiratory chain. The immediate electron acceptor for the enzyme in this species is believed to be ubiquinone. Couples the redox reaction to proton translocation (for every two electrons transferred, four hydrogen ions are translocated across the cytoplasmic membrane), and thus conserves the redox energy in a proton gradient. The polypeptide is NADH-quinone oxidoreductase subunit N 2 (Solidesulfovibrio magneticus (strain ATCC 700980 / DSM 13731 / RS-1) (Desulfovibrio magneticus)).